The sequence spans 511 residues: Cytochrome P450 77A2 (511 aa).

Cysteine 456 lines the heme pocket.

It belongs to the cytochrome P450 family. Requires heme as cofactor.

This chain is Cytochrome P450 77A2 (CYP77A2), found in Solanum melongena (Eggplant).